A 377-amino-acid polypeptide reads, in one-letter code: Glutamate 5-kinase (377 aa).

ATP is bound at residue Lys-22. Substrate-binding residues include Ser-62, Asp-149, and Asn-161. ATP-binding positions include Thr-181–Asp-182 and Thr-223–Lys-229. The PUA domain maps to Gln-285–Phe-359.

It belongs to the glutamate 5-kinase family.

It is found in the cytoplasm. It catalyses the reaction L-glutamate + ATP = L-glutamyl 5-phosphate + ADP. It participates in amino-acid biosynthesis; L-proline biosynthesis; L-glutamate 5-semialdehyde from L-glutamate: step 1/2. Its function is as follows. Catalyzes the transfer of a phosphate group to glutamate to form L-glutamate 5-phosphate. The chain is Glutamate 5-kinase from Bifidobacterium adolescentis (strain ATCC 15703 / DSM 20083 / NCTC 11814 / E194a).